Consider the following 618-residue polypeptide: MEGAEAGARATFGAWDYGVFATMLLVSTGIGLWVGLARGGQRSADDFFTGGRQLAAVPVGLSLAASFMSAVQVLGVPAEAARYGLKFLWMCAGQLLNSLLTAFLFLPIFYRLGLTSTYQYLELRFSRAVRLCGTLQYLVATMLYTGIVIYAPALILNQVTGLDIWASLLSTGIICTLYTTVGGMKAVVWTDVFQVVVMLVGFWVILARGVILLGGPRNVLSLAQNHSRINLMDFDPDPRSRYTFWTFIVGGTLVWLSMYGVNQAQVQRYVACHTEGKAKLALLVNQLGLFLIVASAACCGIVMFVYYKDCDPLLTGRISAPDQYMPLLVLDIFEDLPGVPGLFLACAYSGTLSTASTSINAMAAVTVEDLIKPRMPGLAPRKLVFISKGLSFIYGSACLTVAALSSLLGGGVLQGSFTVMGVISGPLLGAFTLGMLLPACNTPGVLSGLAAGLAVSLWVAVGATLYPPGEQTMGVLPTSAAGCTNDSVLLGPPGATNASNGIPSSGMDTGRPALADTFYAISYLYYGALGTLTTMLCGALISYLTGPTKRSSLGPGLLWWDLARQTASVAPKEDTATLEESLVKGPEDIPAVTKKPPGLKPGAETHPLYLGHDVETNL.

The Extracellular segment spans residues 1–14 (MEGAEAGARATFGA). The helical transmembrane segment at 15–31 (WDYGVFATMLLVSTGIG) threads the bilayer. Residues 32–56 (LWVGLARGGQRSADDFFTGGRQLAA) are Cytoplasmic-facing. A discontinuously helical membrane pass occupies residues 57–80 (VPVGLSLAASFMSAVQVLGVPAEA). 3 residues coordinate Na(+): S69, V71, and Q72. V76 provides a ligand contact to iodide. Residues 81–84 (ARYG) lie on the Extracellular side of the membrane. A helical transmembrane segment spans residues 85-105 (LKFLWMCAGQLLNSLLTAFLF). M90 provides a ligand contact to iodide. Over 106 to 130 (LPIFYRLGLTSTYQYLELRFSRAVR) the chain is Cytoplasmic. A helical membrane pass occupies residues 131–157 (LCGTLQYLVATMLYTGIVIYAPALILN). A Na(+)-binding site is contributed by Y144. The Extracellular portion of the chain corresponds to 158-163 (QVTGLD). Residues 164 to 181 (IWASLLSTGIICTLYTTV) traverse the membrane as a helical segment. The Cytoplasmic portion of the chain corresponds to 182–189 (GGMKAVVW). Residues 190-208 (TDVFQVVVMLVGFWVILAR) form a helical membrane-spanning segment. At 209 to 243 (GVILLGGPRNVLSLAQNHSRINLMDFDPDPRSRYT) the chain is on the extracellular side. Residues 244–266 (FWTFIVGGTLVWLSMYGVNQAQV) traverse the membrane as a discontinuously helical segment. W255 provides a ligand contact to iodide. A Na(+)-binding site is contributed by M258. At 267–278 (QRYVACHTEGKA) the chain is on the cytoplasmic side. Residues 279 to 301 (KLALLVNQLGLFLIVASAACCGI) form a helical membrane-spanning segment. Residues 302-335 (VMFVYYKDCDPLLTGRISAPDQYMPLLVLDIFED) are Extracellular-facing. Residues 336–363 (LPGVPGLFLACAYSGTLSTASTSINAMA) form a helical membrane-spanning segment. Residues 364 to 386 (AVTVEDLIKPRMPGLAPRKLVFI) lie on the Cytoplasmic side of the membrane. A helical membrane pass occupies residues 387–408 (SKGLSFIYGSACLTVAALSSLL). The Extracellular segment spans residues 409–411 (GGG). Residues 412–437 (VLQGSFTVMGVISGPLLGAFTLGMLL) form a helical membrane-spanning segment. L413 lines the iodide pocket. Na(+)-binding residues include S416 and F417. F417 is an iodide binding site. The Cytoplasmic segment spans residues 438 to 441 (PACN). The chain crosses the membrane as a helical span at residues 442–465 (TPGVLSGLAAGLAVSLWVAVGATL). At 466-520 (YPPGEQTMGVLPTSAAGCTNDSVLLGPPGATNASNGIPSSGMDTGRPALADTFYA) the chain is on the extracellular side. N485 and N497 each carry an N-linked (GlcNAc...) asparagine glycan. The helical transmembrane segment at 521 to 545 (ISYLYYGALGTLTTMLCGALISYLT) threads the bilayer. The Cytoplasmic portion of the chain corresponds to 546-618 (GPTKRSSLGP…YLGHDVETNL (73 aa)). S551 carries the phosphoserine; by PKA modification. Positions 587–618 (EDIPAVTKKPPGLKPGAETHPLYLGHDVETNL) are disordered.

Belongs to the sodium:solute symporter (SSF) (TC 2.A.21) family. Monomer.

It localises to the cell membrane. The protein resides in the cytoplasm. The enzyme catalyses iodide(out) + 2 Na(+)(out) = iodide(in) + 2 Na(+)(in). It carries out the reaction chlorate(out) + 2 Na(+)(out) = chlorate(in) + 2 Na(+)(in). It catalyses the reaction thiocyanate(out) + 2 Na(+)(out) = thiocyanate(in) + 2 Na(+)(in). The catalysed reaction is nitrate(out) + 2 Na(+)(out) = nitrate(in) + 2 Na(+)(in). The enzyme catalyses selenocyanate(out) + 2 Na(+)(out) = selenocyanate(in) + 2 Na(+)(in). Its activity is regulated as follows. Perchlorate inhibits iodide transport activity. Oxyanions inhibit iodide transport activity by blocking the binding sites for iodide and one of the sodium ions. Its function is as follows. Sodium:iodide symporter that mediates the transport of iodide into the thyroid gland. Can also mediate the transport of chlorate, thiocynate, nitrate and selenocynate. The sequence is that of Sodium/iodide cotransporter (Slc5a5) from Rattus norvegicus (Rat).